Consider the following 213-residue polypeptide: Probable transaldolase (213 aa).

The active-site Schiff-base intermediate with substrate is the lysine 83.

The protein belongs to the transaldolase family. Type 3B subfamily.

The protein localises to the cytoplasm. The catalysed reaction is D-sedoheptulose 7-phosphate + D-glyceraldehyde 3-phosphate = D-erythrose 4-phosphate + beta-D-fructose 6-phosphate. It participates in carbohydrate degradation; pentose phosphate pathway; D-glyceraldehyde 3-phosphate and beta-D-fructose 6-phosphate from D-ribose 5-phosphate and D-xylulose 5-phosphate (non-oxidative stage): step 2/3. In terms of biological role, transaldolase is important for the balance of metabolites in the pentose-phosphate pathway. The polypeptide is Probable transaldolase (Desulfitobacterium hafniense (strain DSM 10664 / DCB-2)).